We begin with the raw amino-acid sequence, 714 residues long: Kinesin-like protein KIN-13 (714 aa).

The SAM domain occupies 1–63 (MSDLVYQWLE…FRLITTLKSR (63 aa)). The span at 69-81 (QQPSAPNTGATPQ) shows a compositional bias: polar residues. Disordered stretches follow at residues 69 to 109 (QQPS…NDIQ) and 122 to 161 (GGYE…NPRG). Low complexity predominate over residues 82–92 (SVPSSHVSPHV). Pro residues predominate over residues 151–160 (PNAPNPPNPR). The Kinesin motor domain maps to 183-515 (RIRVVIRKRP…LRYADRVKEL (333 aa)). Residue 273–280 (GQTGSGKS) participates in ATP binding.

The protein belongs to the TRAFAC class myosin-kinesin ATPase superfamily. Kinesin family. KIN-13 subfamily. In terms of assembly, interacts with PLK. In terms of processing, phosphorylated by PLK.

It localises to the cytoplasm. Its subcellular location is the cytoskeleton. It is found in the cell projection. The protein localises to the cilium. The protein resides in the flagellum. It localises to the flagellum basal body. Its subcellular location is the flagellum axoneme. It is found in the spindle. The protein localises to the chromosome. The protein resides in the centromere. It localises to the kinetochore. Its function is as follows. Involved in cell cycle. Involved in formation of flagella, regulation of flagellar length, and formation of median bodies during interphase. Regulates flagellar length in all eight distal flagellar tips by promoting disassembly of the microtubules. Disassembles microtubules at the distal flagellar tips in a length-dependent manner in order to maintain different equilibrium lengths of the four flagellar pairs. Regulates interphase and mitotic microtubule dynamics. Regulates microtubule disassembly dynamics of the dual mitotic spindles and the median body. In Giardia intestinalis (strain ATCC 50803 / WB clone C6) (Giardia lamblia), this protein is Kinesin-like protein KIN-13.